The following is a 397-amino-acid chain: Phosphoglycerate kinase (397 aa).

Residues 21-23 (DVN), Arg-36, 59-62 (HFGR), Arg-119, and Arg-152 contribute to the substrate site. Residues Lys-202, Glu-324, and 354-357 (GGDT) each bind ATP.

Belongs to the phosphoglycerate kinase family. As to quaternary structure, monomer.

It localises to the cytoplasm. The enzyme catalyses (2R)-3-phosphoglycerate + ATP = (2R)-3-phospho-glyceroyl phosphate + ADP. It participates in carbohydrate degradation; glycolysis; pyruvate from D-glyceraldehyde 3-phosphate: step 2/5. This Cereibacter sphaeroides (strain ATCC 17025 / ATH 2.4.3) (Rhodobacter sphaeroides) protein is Phosphoglycerate kinase.